A 55-amino-acid chain; its full sequence is Large ribosomal subunit protein bL33 (55 aa).

Residues 1–11 show a composition bias toward basic and acidic residues; that stretch reads MAKGGREKIKL. Positions 1–29 are disordered; that stretch reads MAKGGREKIKLESSAGTGHFYTTSKNKRT. The segment covering 14–24 has biased composition (polar residues); sequence SAGTGHFYTTS.

This sequence belongs to the bacterial ribosomal protein bL33 family.

This chain is Large ribosomal subunit protein bL33, found in Polynucleobacter asymbioticus (strain DSM 18221 / CIP 109841 / QLW-P1DMWA-1) (Polynucleobacter necessarius subsp. asymbioticus).